We begin with the raw amino-acid sequence, 1394 residues long: Leucine-rich PPR motif-containing protein, mitochondrial (1394 aa).

The transit peptide at 1-59 (MAALLRSARWLLRAGAAPRLPLSLRLLPGGPGRLHAASYLPAARAGPVAGGLLSPARLY) directs the protein to the mitochondrion. PPR repeat units lie at residues 126–160 (LLRSCGSLLPELKLEERTEFAHRIWDTLQKLGAVY), 161–195 (DVSHYNALLKVYLQNEYKFSPTDFLAKMEEANIQP), 196–230 (NRVTYQRLIASYCNVGDIEGASKILGFMKTKDLPV), 231–265 (TEAVFSALVTGHARAGDMENAENILTVMRDAGIEP), 266–300 (GPDTYLALLNAYAEKGDIDHVKQTLEKVEKSELHL), 301–335 (MDRDLLQIIFSFSKAGYPQYVSEILEKVTCERRYI), 403–437 (HSFPLQFTLHCALLANKTDLAKALMKAVKEEGFPI), and 438–472 (RPHYFWPLLVGRRKEKNVQGIIEILKGMQELGVHP). Lys155, Lys187, and Lys226 each carry N6-acetyllysine. At Lys292 the chain carries N6-acetyllysine. Lys463 and Lys613 each carry N6-acetyllysine. PPR repeat units lie at residues 678–709 (IRDVLKQLILVLCSEENMQKALELKAKYESDM), 710–746 (VTGGYAALINLCCRHDKVEDALNLKEEFDRLDSSAVL), 747–784 (DTGKYVGLVRVLAKHGKLQDAINILKEMKEKDVLIKDT), 785–820 (TALSFFHMLNGAALRGEIETVKQLHEAIVTLGLAEP), 821–856 (STNISFPLVTVHLEKGDLSTALEVAIDCYEKYKVLP), and 954–988 (RDQMYYNLLKLYKINGDWQRADAVWNKIQEENVIP). An interaction with BECN1 and Aedes aegypti venom allergen-1 region spans residues 712–1067 (GGYAALINLC…AKEQNIVFNA (356 aa)). Residues Lys726 and Lys750 each carry the N6-acetyllysine modification. Phosphoserine is present on residues Ser1026, Ser1027, and Ser1029. PPR repeat units follow at residues 1031–1065 (TEPDFQKDILIACRLNQKKGAYDIFLNAKEQNIVF), 1066–1102 (NAETYSNLIKLLMSEDYFTQAMEVKAFAETHIKGFTL), 1103–1137 (NDAANSRLIITQVRRDYLKEAVTTLKTVLDQQQTP), 1138–1175 (SRLAVTRVIQALAMKGDVENIEVVQKMLNGLEDSIGLS), 1176–1210 (KMVFINNIALAQIKNNNIDAAIENIENMLTSENKV), and 1317–1351 (KEEAYNSLMKSYVSEKDVTSAKALYEHLTAKNTKL). Residues 1121 to 1394 (KEAVTTLKTV…QLRKLRENSS (274 aa)) are RNA-binding. Thr1136 bears the Phosphothreonine mark. Ser1138 carries the phosphoserine modification.

Component of mRNP complexes associated with HNRPA1. Component of the complex, at least composed of LRPPRC, BECN1 and BCL2; the interactions prevent BECN1 from forming an autophagy-inducing complex with PIK3C3. Interacts with CECR2, HEBP2, MAP1S and UXT. Interacts with PPARGC1A. Interacts with FOXO1. Interacts (via N-terminus) with EIF4E; the interaction promotes association of EIF4E with 4ESE-containing mRNAs. Interacts with exportin XPO1/CRM1; interacts both alone and in complex with EIF4E and 4ESE-containing mRNAs to form an EIF4E-dependent mRNA export complex. Interacts with importin IPO8; the interaction occurs when LRPPRC is in its RNA-free form and returns LRPPRC to the nucleus for further export rounds. Interacts with BECN1. Interacts with Aedes aegypti venom allergen-1; the interaction interrupts BECN1 and LRPPRC association. Expressed ubiquitously. Expression is highest in heart, skeletal muscle, kidney and liver, intermediate in brain, non-mucosal colon, spleen and placenta, and lowest in small intestine, thymus, lung and peripheral blood leukocytes.

It localises to the mitochondrion. The protein resides in the nucleus. It is found in the nucleoplasm. Its subcellular location is the nucleus inner membrane. The protein localises to the nucleus outer membrane. Functionally, may play a role in RNA metabolism in both nuclei and mitochondria. In the nucleus binds to HNRPA1-associated poly(A) mRNAs and is part of nmRNP complexes at late stages of mRNA maturation which are possibly associated with nuclear mRNA export. Positively modulates nuclear export of mRNAs containing the EIF4E sensitivity element (4ESE) by binding simultaneously to both EIF4E and the 4ESE and acting as a platform for assembly for the RNA export complex. Also binds to exportin XPO1/CRM1 to engage the nuclear pore and traffic the bound mRNAs to the cytoplasm. May bind mature mRNA in the nucleus outer membrane. In mitochondria binds to poly(A) mRNA. Plays a role in translation or stability of mitochondrially encoded cytochrome c oxidase (COX) subunits. May be involved in transcription regulation. Cooperates with PPARGC1A to regulate certain mitochondrially encoded genes and gluconeogenic genes and may regulate docking of PPARGC1A to transcription factors. Seems to be involved in the transcription regulation of the multidrug-related genes MDR1 and MVP. Part of a nuclear factor that binds to the invMED1 element of MDR1 and MVP gene promoters. Binds single-stranded DNA. Required for maintaining mitochondrial potential. Suppresses the initiation of basal levels of autophagy and mitophagy by sustaining BCL2 levels. The sequence is that of Leucine-rich PPR motif-containing protein, mitochondrial (LRPPRC) from Homo sapiens (Human).